The following is a 594-amino-acid chain: Interactor of HORMAD1 protein 1 (594 aa).

3 coiled-coil regions span residues 109-135 (VGKS…SETL), 165-189 (QSIL…NDLV), and 219-245 (EMKS…CEQL). Basic and acidic residues predominate over residues 434-443 (VEMRGKDKKQ). The segment at 434-454 (VEMRGKDKKQQPRKAHRAHRG) is disordered. The segment covering 444–454 (QPRKAHRAHRG) has biased composition (basic residues). Phosphoserine is present on residues Ser-588 and Ser-589.

As to quaternary structure, part of the MCD recombinosome complex, at least composed of IHO1, REC114 and MEI4. Interacts with REC114. Interacts with MEI4. Interacts with HORMAD1. Interacts with ANKRD31.

It localises to the chromosome. In terms of biological role, required for DNA double-strand breaks (DSBs) formation in unsynapsed regions during meiotic recombination. Probably acts by forming a complex with MEI4 and REC114, which activates DSBs formation in unsynapsed regions, an essential step to ensure completion of synapsis. Not required for HORMAD1 functions in pairing-independent synaptonemal complex formation, ATR recruitment to unsynapsed axes, meiotic silencing of unsynapsed chromatin (MSUC) or meiotic surveillance. The protein is Interactor of HORMAD1 protein 1 of Homo sapiens (Human).